We begin with the raw amino-acid sequence, 323 residues long: Lipoyl synthase (323 aa).

The segment at 1–27 is disordered; it reads MVTILDRTSSDEKRIRHPEKAHRPDTE. [4Fe-4S] cluster-binding residues include C61, C66, C72, C87, C91, C94, and S300. The Radical SAM core domain occupies 73–289; that stretch reads WEKKHATFMI…ETVAYAKGFL (217 aa).

It belongs to the radical SAM superfamily. Lipoyl synthase family. [4Fe-4S] cluster is required as a cofactor.

Its subcellular location is the cytoplasm. The enzyme catalyses [[Fe-S] cluster scaffold protein carrying a second [4Fe-4S](2+) cluster] + N(6)-octanoyl-L-lysyl-[protein] + 2 oxidized [2Fe-2S]-[ferredoxin] + 2 S-adenosyl-L-methionine + 4 H(+) = [[Fe-S] cluster scaffold protein] + N(6)-[(R)-dihydrolipoyl]-L-lysyl-[protein] + 4 Fe(3+) + 2 hydrogen sulfide + 2 5'-deoxyadenosine + 2 L-methionine + 2 reduced [2Fe-2S]-[ferredoxin]. It participates in protein modification; protein lipoylation via endogenous pathway; protein N(6)-(lipoyl)lysine from octanoyl-[acyl-carrier-protein]: step 2/2. Its function is as follows. Catalyzes the radical-mediated insertion of two sulfur atoms into the C-6 and C-8 positions of the octanoyl moiety bound to the lipoyl domains of lipoate-dependent enzymes, thereby converting the octanoylated domains into lipoylated derivatives. The protein is Lipoyl synthase of Agrobacterium fabrum (strain C58 / ATCC 33970) (Agrobacterium tumefaciens (strain C58)).